Here is a 315-residue protein sequence, read N- to C-terminus: Small ribosomal subunit protein mS45 (315 aa).

The N-terminal 66 residues, 1-66 (MRNSVEFSQL…SKYVACNSRS (66 aa)), are a transit peptide targeting the mitochondrion.

Belongs to the mitochondrion-specific ribosomal protein mS45 family. Component of the mitochondrial small ribosomal subunit (mt-SSU). Mature yeast 74S mitochondrial ribosomes consist of a small (37S) and a large (54S) subunit. The 37S small subunit contains a 15S ribosomal RNA (15S mt-rRNA) and at least 32 different proteins. The 54S large subunit contains a 21S rRNA (21S mt-rRNA) and at least 45 different proteins.

Its subcellular location is the mitochondrion. Component of the mitochondrial ribosome (mitoribosome), a dedicated translation machinery responsible for the synthesis of mitochondrial genome-encoded proteins, including at least some of the essential transmembrane subunits of the mitochondrial respiratory chain. The mitoribosomes are attached to the mitochondrial inner membrane and translation products are cotranslationally integrated into the membrane. Required for mitochondrial protein synthesis. Has a role in mitochondrial integrity and cell respiration. The sequence is that of Small ribosomal subunit protein mS45 (bot1) from Schizosaccharomyces pombe (strain 972 / ATCC 24843) (Fission yeast).